We begin with the raw amino-acid sequence, 407 residues long: Dephospho-CoA kinase (407 aa).

In terms of domain architecture, DPCK spans 3-204 (RIGLTGGIGA…QPFAHNLAQR (202 aa)). 11–16 (GAGKSL) contributes to the ATP binding site. A UPF0157 region spans residues 196–407 (PFAHNLAQRQ…EWADAVHWRP (212 aa)).

It in the N-terminal section; belongs to the CoaE family. In the C-terminal section; belongs to the UPF0157 (GrpB) family.

It is found in the cytoplasm. It carries out the reaction 3'-dephospho-CoA + ATP = ADP + CoA + H(+). It functions in the pathway cofactor biosynthesis; coenzyme A biosynthesis; CoA from (R)-pantothenate: step 5/5. Its function is as follows. Catalyzes the phosphorylation of the 3'-hydroxyl group of dephosphocoenzyme A to form coenzyme A. The polypeptide is Dephospho-CoA kinase (Mycobacterium bovis (strain ATCC BAA-935 / AF2122/97)).